A 165-amino-acid chain; its full sequence is Protein SprT (165 aa).

One can recognise a SprT-like domain in the interval 20–163 (EKLAQANLKL…RCVHCGEQLV (144 aa)). Histidine 78 lines the Zn(2+) pocket. Residue glutamate 79 is part of the active site. Histidine 82 provides a ligand contact to Zn(2+).

This sequence belongs to the SprT family. The cofactor is Zn(2+).

It is found in the cytoplasm. This chain is Protein SprT, found in Shigella flexneri serotype 5b (strain 8401).